The sequence spans 860 residues: Leucine--tRNA ligase (860 aa).

Positions 42–52 (PYPSGRLHMGH) match the 'HIGH' region motif. The 'KMSKS' region motif lies at 619-623 (KMSKS). K622 is an ATP binding site.

It belongs to the class-I aminoacyl-tRNA synthetase family.

The protein localises to the cytoplasm. It carries out the reaction tRNA(Leu) + L-leucine + ATP = L-leucyl-tRNA(Leu) + AMP + diphosphate. This Pasteurella multocida (strain Pm70) protein is Leucine--tRNA ligase.